We begin with the raw amino-acid sequence, 334 residues long: Sensor protein BceS (334 aa).

Over 1 to 12 (MIKAFLIERRSW) the chain is Cytoplasmic. A helical membrane pass occupies residues 13–33 (IAAFLFQQALMLFIAFVDPSI). Position 34 (serine 34) is a topological domain, extracellular. The helical transmembrane segment at 35–55 (FGNVLYMVYLCILFFIIFLWF) threads the bilayer. Over 56 to 334 (RYRKETAFYK…RNQFEHVISV (279 aa)) the chain is Cytoplasmic. One can recognise a Histidine kinase domain in the interval 121–326 (AWIHEVKTPL…VFTLTFPIRN (206 aa)). Histidine 124 bears the Phosphohistidine; by autocatalysis mark.

Its subcellular location is the cell membrane. The enzyme catalyses ATP + protein L-histidine = ADP + protein N-phospho-L-histidine.. In terms of biological role, member of the two-component regulatory system BceS/BceR involved in the regulation of bacitracin resistance. Activates BceR in response to extracellular bacitracin. This Bacillus subtilis (strain 168) protein is Sensor protein BceS (bceS).